We begin with the raw amino-acid sequence, 271 residues long: Formamidopyrimidine-DNA glycosylase (271 aa).

P2 (schiff-base intermediate with DNA) is an active-site residue. The active-site Proton donor is E3. K58 acts as the Proton donor; for beta-elimination activity in catalysis. 3 residues coordinate DNA: H91, R110, and R152. The FPG-type zinc finger occupies 237–271; it reads WVYGRTGQPCRKCGALVSKTRQGQRSSFFCAQCQK. R261 serves as the catalytic Proton donor; for delta-elimination activity.

Belongs to the FPG family. Monomer. Zn(2+) is required as a cofactor.

It catalyses the reaction Hydrolysis of DNA containing ring-opened 7-methylguanine residues, releasing 2,6-diamino-4-hydroxy-5-(N-methyl)formamidopyrimidine.. It carries out the reaction 2'-deoxyribonucleotide-(2'-deoxyribose 5'-phosphate)-2'-deoxyribonucleotide-DNA = a 3'-end 2'-deoxyribonucleotide-(2,3-dehydro-2,3-deoxyribose 5'-phosphate)-DNA + a 5'-end 5'-phospho-2'-deoxyribonucleoside-DNA + H(+). Its function is as follows. Involved in base excision repair of DNA damaged by oxidation or by mutagenic agents. Acts as a DNA glycosylase that recognizes and removes damaged bases. Has a preference for oxidized purines, such as 7,8-dihydro-8-oxoguanine (8-oxoG). Has AP (apurinic/apyrimidinic) lyase activity and introduces nicks in the DNA strand. Cleaves the DNA backbone by beta-delta elimination to generate a single-strand break at the site of the removed base with both 3'- and 5'-phosphates. The sequence is that of Formamidopyrimidine-DNA glycosylase from Nitrosomonas eutropha (strain DSM 101675 / C91 / Nm57).